The following is a 514-amino-acid chain: MSHNAPLVLMILDGWGYNENDRYNAIAKANTPQWDEWWQTCPHILLKASGLPVGLPDEQMGNSEVGHMHIGAGRVIQQDFTRINEAINNGKFAKNAVFHEVIDQLKKTEKSLHIMGLLSPGGVHSHEQHLFALLALCNQKKFRSVHLHLFLDGRDTPPQSALDSLKCLNEELAKHPVATINSICGRYYAMDRDKRWERVEPVYNLLTQGKSERQFPDAETAIHFYYKNKISDEFVPPTLIGKEHSIQDGDAVLFFNFRADRARQLTSTFLDPLFKGFERKTLPKLSCFVSMTQYDKNLFTTTAFPPVPLNNTLGEVLSSHGLSQLRIAETEKYAHVTFFFNGGCESVFTNEERIMVPSPQVATYDLQPEMSAHELTKTLIAAINSRDYHVIICNYANADMVGHTGNFEATVQAIECLDQCMQQVWQALKNNGGKLLITADHGNAEEMFSEATNQAHTAHTSEPVPFLYVGGGWHFTHSEGSLIDIAPSLLALLGITPPPEMTGRILLEKNHAHA.

Residues aspartate 13 and serine 63 each coordinate Mn(2+). Residue serine 63 is the Phosphoserine intermediate of the active site. Substrate contacts are provided by residues histidine 124, 154 to 155, arginine 186, arginine 192, 258 to 261, and lysine 332; these read RD and RADR. Positions 399, 403, 440, 441, and 459 each coordinate Mn(2+).

Belongs to the BPG-independent phosphoglycerate mutase family. Monomer. Requires Mn(2+) as cofactor.

The catalysed reaction is (2R)-2-phosphoglycerate = (2R)-3-phosphoglycerate. Its pathway is carbohydrate degradation; glycolysis; pyruvate from D-glyceraldehyde 3-phosphate: step 3/5. Catalyzes the interconversion of 2-phosphoglycerate and 3-phosphoglycerate. The polypeptide is 2,3-bisphosphoglycerate-independent phosphoglycerate mutase (Legionella pneumophila (strain Paris)).